A 726-amino-acid polypeptide reads, in one-letter code: MSTSDDIHNTTATGKCPFHQGGHDQSAGGGTTTRDWWPNQLRVDLLNQHSNRSNPLGEDFDYRKEFSKLDYYGLKKDLKALLTESQPWWPADWGSYAGLFIRMAWHGAGTYRSIDGRGGAGRGQQRFAPLNSWPDNVSLDKARRLLWPIKQKYGQKISWADLFILAGNVALENSGFRTFGFGAGREDVWEPDLDVNWGDEKAWLTHRHPEALAKAPLGATEMGLIYVNPEGPDHSGEPLSAAAAIRATFGNMGMNDEETVALIAGGHTLGKTHGAGPTSNVGPDPEAAPIEEQGLGWASTYGSGVGADAITSGLEVVWTQTPTQWSNYFFENLFKYEWVQTRSPAGAIQFEAVDAPEIIPDPFDPSKKRKPTMLVTDLTLRFDPEFEKISRRFLNDPQAFNEAFARAWFKLTHRDMGPKSRYIGPEVPKEDLIWQDPLPQPIYNPTEQDIIDLKFAIADSGLSVSELVSVAWASASTFRGGDKRGGANGARLALMPQRDWDVNAAAVRALPVLEKIQKESGKASLADIIVLAGVVGVEKAASAAGLSIHVPFAPGRVDARQDQTDIEMFELLEPIADGFRNYRARLDVSTTESLLIDKAQQLTLTAPEMTALVGGMRVLGANFDGSKNGVFTDRVGVLSNDFFVNLLDMRYEWKATDESKELFEGRDRETGEVKYTASRADLVFGSNSVLRAVAEVYASSDAHEKFVKDFVAAWVKVMNLDRFDLL.

Residues 1 to 33 (MSTSDDIHNTTATGKCPFHQGGHDQSAGGGTTT) form a disordered region. Positions 105 to 226 (WHGAGTYRSI…LGATEMGLIY (122 aa)) form a cross-link, tryptophyl-tyrosyl-methioninium (Trp-Tyr) (with M-252). Histidine 106 acts as the Proton acceptor in catalysis. A cross-link (tryptophyl-tyrosyl-methioninium (Tyr-Met) (with W-105)) is located at residues 226–252 (YVNPEGPDHSGEPLSAAAAIRATFGNM). Histidine 267 is a heme b binding site.

It belongs to the peroxidase family. Peroxidase/catalase subfamily. As to quaternary structure, homodimer or homotetramer. Heme b is required as a cofactor. Post-translationally, formation of the three residue Trp-Tyr-Met cross-link is important for the catalase, but not the peroxidase activity of the enzyme.

It carries out the reaction H2O2 + AH2 = A + 2 H2O. The catalysed reaction is 2 H2O2 = O2 + 2 H2O. Bifunctional enzyme with both catalase and broad-spectrum peroxidase activity. This Escherichia coli O1:K1 / APEC protein is Catalase-peroxidase.